A 506-amino-acid polypeptide reads, in one-letter code: Glycerol kinase (506 aa).

ADP is bound at residue Thr12. ATP contacts are provided by Thr12, Thr13, and Ser14. Thr12 serves as a coordination point for sn-glycerol 3-phosphate. Arg16 lines the ADP pocket. Residues Arg82, Glu83, Tyr134, and Asp246 each contribute to the sn-glycerol 3-phosphate site. Glycerol contacts are provided by Arg82, Glu83, Tyr134, Asp246, and Gln247. ADP contacts are provided by Thr268 and Gly312. Positions 268, 312, 316, and 413 each coordinate ATP. ADP is bound by residues Gly413 and Asn417.

It belongs to the FGGY kinase family.

It carries out the reaction glycerol + ATP = sn-glycerol 3-phosphate + ADP + H(+). It participates in polyol metabolism; glycerol degradation via glycerol kinase pathway; sn-glycerol 3-phosphate from glycerol: step 1/1. Inhibited by fructose 1,6-bisphosphate (FBP). Its function is as follows. Key enzyme in the regulation of glycerol uptake and metabolism. Catalyzes the phosphorylation of glycerol to yield sn-glycerol 3-phosphate. This is Glycerol kinase from Leifsonia xyli subsp. xyli (strain CTCB07).